A 606-amino-acid polypeptide reads, in one-letter code: Chaperone protein DnaK (606 aa).

Position 174 is a phosphothreonine; by autocatalysis (T174). A compositionally biased stretch (polar residues) spans 579–593 (ASAAGNPGQGQTNEN). Residues 579–606 (ASAAGNPGQGQTNENPGGKTIDGDYKVN) are disordered.

The protein belongs to the heat shock protein 70 family.

In terms of biological role, acts as a chaperone. In Dictyoglomus thermophilum (strain ATCC 35947 / DSM 3960 / H-6-12), this protein is Chaperone protein DnaK.